We begin with the raw amino-acid sequence, 563 residues long: Arginine--tRNA ligase (563 aa).

A 'HIGH' region motif is present at residues 121 to 131 (PNIAKPFSIGH).

The protein belongs to the class-I aminoacyl-tRNA synthetase family. Monomer.

The protein resides in the cytoplasm. The catalysed reaction is tRNA(Arg) + L-arginine + ATP = L-arginyl-tRNA(Arg) + AMP + diphosphate. This Streptococcus pneumoniae (strain Taiwan19F-14) protein is Arginine--tRNA ligase.